The primary structure comprises 61 residues: Small ribosomal subunit protein uS14 (61 aa).

Zn(2+) contacts are provided by cysteine 24, cysteine 27, cysteine 40, and cysteine 43.

Belongs to the universal ribosomal protein uS14 family. Zinc-binding uS14 subfamily. In terms of assembly, part of the 30S ribosomal subunit. Contacts proteins S3 and S10. Zn(2+) serves as cofactor.

In terms of biological role, binds 16S rRNA, required for the assembly of 30S particles and may also be responsible for determining the conformation of the 16S rRNA at the A site. This is Small ribosomal subunit protein uS14 from Sulfurimonas denitrificans (strain ATCC 33889 / DSM 1251) (Thiomicrospira denitrificans (strain ATCC 33889 / DSM 1251)).